The chain runs to 31 residues: Cyclotide mech-5 (31 aa).

A cross-link (cyclopeptide (Gly-Asp)) is located at residues 1–31 (GVIPCGESCVFIPCISSVVGCTCKNKVCYRD). 3 cysteine pairs are disulfide-bonded: Cys5-Cys21, Cys9-Cys23, and Cys14-Cys28.

In terms of processing, this is a cyclic peptide. Post-translationally, contains 3 disulfide bonds.

In terms of biological role, probably participates in a plant defense mechanism (Potential). Binds to and induces leakage in phospholipd membranes, particularly ones containing 1-palmitoyl-2-oleophosphatidylethanolamine (POPE). The polypeptide is Cyclotide mech-5 (Melicytus chathamicus (Chatham Island mahoe)).